A 245-amino-acid polypeptide reads, in one-letter code: Phosphoadenosine 5'-phosphosulfate reductase (245 aa).

Cys-239 serves as the catalytic Nucleophile; cysteine thiosulfonate intermediate.

Belongs to the PAPS reductase family. CysH subfamily.

It localises to the cytoplasm. It catalyses the reaction [thioredoxin]-disulfide + sulfite + adenosine 3',5'-bisphosphate + 2 H(+) = [thioredoxin]-dithiol + 3'-phosphoadenylyl sulfate. It participates in sulfur metabolism; hydrogen sulfide biosynthesis; sulfite from sulfate: step 3/3. Functionally, catalyzes the formation of sulfite from phosphoadenosine 5'-phosphosulfate (PAPS) using thioredoxin as an electron donor. This chain is Phosphoadenosine 5'-phosphosulfate reductase, found in Baumannia cicadellinicola subsp. Homalodisca coagulata.